The primary structure comprises 429 residues: Glutamate-1-semialdehyde 2,1-aminomutase 2 (429 aa).

Lys-268 carries the post-translational modification N6-(pyridoxal phosphate)lysine.

The protein belongs to the class-III pyridoxal-phosphate-dependent aminotransferase family. HemL subfamily. In terms of assembly, homodimer. The cofactor is pyridoxal 5'-phosphate.

It localises to the cytoplasm. It catalyses the reaction (S)-4-amino-5-oxopentanoate = 5-aminolevulinate. It participates in porphyrin-containing compound metabolism; protoporphyrin-IX biosynthesis; 5-aminolevulinate from L-glutamyl-tRNA(Glu): step 2/2. In Staphylococcus aureus (strain Mu50 / ATCC 700699), this protein is Glutamate-1-semialdehyde 2,1-aminomutase 2.